A 4660-amino-acid chain; its full sequence is Low-density lipoprotein receptor-related protein 2 (4660 aa).

The signal sequence occupies residues 1 to 25 (MERGAAAAAWMLLLAIAACLEPVSS). Topologically, residues 26–4425 (QECGSGNFRC…LSRGIPPGTT (4400 aa)) are extracellular. 6 LDL-receptor class A domains span residues 27–63 (ECGS…IGCP), 66–104 (SCES…QNCA), 107–143 (TCSA…RNCH), 141–180 (NCHY…ANCT), 182–218 (LCSQ…RNCN), and 221–257 (TCGG…DGCE). Cystine bridges form between Cys-28–Cys-40, Cys-35–Cys-53, Cys-47–Cys-62, Cys-67–Cys-80, Cys-74–Cys-93, Cys-87–Cys-103, Cys-108–Cys-120, Cys-115–Cys-133, Cys-127–Cys-142, Cys-142–Cys-157, Cys-152–Cys-170, Cys-164–Cys-179, Cys-183–Cys-195, Cys-190–Cys-208, Cys-202–Cys-217, Cys-222–Cys-234, Cys-229–Cys-247, and Cys-241–Cys-256. Asn-159 and Asn-178 each carry an N-linked (GlcNAc...) asparagine glycan. Residue Asn-259 is glycosylated (N-linked (GlcNAc...) asparagine). An LDL-receptor class A 7 domain is found at 264-307 (RCYPREWACPGSGRCISIDKVCDGVPDCPEGDDENNVTSGRTCG). Cystine bridges form between Cys-265-Cys-278, Cys-272-Cys-291, and Cys-285-Cys-306. Asn-299 and Asn-340 each carry an N-linked (GlcNAc...) asparagine glycan. The region spanning 347 to 382 (DFDDCQIWGICDQKCENRQGRHQCLCEEGYILERGQ) is the EGF-like 1; calcium-binding domain. 2 cysteine pairs are disulfide-bonded: Cys-351–Cys-361 and Cys-357–Cys-370. LDL-receptor class B repeat units lie at residues 435-477 (HRVF…DWIN), 478-520 (NKLY…DPTV), 521-567 (GYLF…DLVS), and 568-612 (KRVY…FEEH). N-linked (GlcNAc...) asparagine glycosylation is present at Asn-462. Residue Asn-657 is glycosylated (N-linked (GlcNAc...) asparagine). 4 LDL-receptor class B repeats span residues 752–794 (STVF…DWIS), 795–836 (RNLY…HPTA), 837–880 (GYMF…DWSA), and 881–924 (SRLY…FKDN). N-linked (GlcNAc...) asparagine glycosylation is present at Asn-865. Residues 1024-1060 (QCGSLSFPCNNGKCVPSFFRCDGVDDCHDNSDEHQCG) form the LDL-receptor class A 8 domain. Cystine bridges form between Cys-1025–Cys-1037, Cys-1032–Cys-1050, and Cys-1044–Cys-1059. Residue Asn-1063 is glycosylated (N-linked (GlcNAc...) asparagine). LDL-receptor class A domains lie at 1065–1102 (TCSP…QNCP), 1109–1145 (TCPS…KNCQ), 1149–1185 (TCQP…AGCV), 1187–1224 (NCTS…AGCP), 1230–1268 (MCHP…TGCV), 1271–1307 (TCSP…KDCP), and 1312–1350 (HCPS…PLCN). 9 disulfides stabilise this stretch: Cys-1066–Cys-1079, Cys-1073–Cys-1092, Cys-1086–Cys-1101, Cys-1110–Cys-1122, Cys-1117–Cys-1135, Cys-1129–Cys-1144, Cys-1150–Cys-1162, Cys-1157–Cys-1175, and Cys-1169–Cys-1184. Ca(2+) is bound by residues Trp-1127, Asp-1130, Asp-1132, Asp-1134, Asp-1140, and Glu-1141. Residue Asn-1187 is glycosylated (N-linked (GlcNAc...) asparagine). 18 disulfides stabilise this stretch: Cys-1188–Cys-1201, Cys-1195–Cys-1214, Cys-1208–Cys-1223, Cys-1231–Cys-1244, Cys-1238–Cys-1257, Cys-1251–Cys-1267, Cys-1272–Cys-1284, Cys-1279–Cys-1297, Cys-1291–Cys-1306, Cys-1313–Cys-1326, Cys-1320–Cys-1339, Cys-1333–Cys-1349, Cys-1354–Cys-1365, Cys-1361–Cys-1374, Cys-1376–Cys-1389, Cys-1395–Cys-1405, Cys-1401–Cys-1414, and Cys-1416–Cys-1429. The Ca(2+) site is built by Tyr-1206, Asp-1209, Val-1211, Asp-1213, Asp-1219, and Glu-1220. 2 N-linked (GlcNAc...) asparagine glycosylation sites follow: Asn-1328 and Asn-1341. An EGF-like 2 domain is found at 1350–1390 (NQDSCSHFNGGCTHQCMQGPFGATCLCPLGYQLANDTKTCE). A glycan (N-linked (GlcNAc...) asparagine) is linked at Asn-1384. The EGF-like 3; calcium-binding domain occupies 1391–1430 (DINECDIPGFCSQHCVNMRGSFRCACDPEYTLESDGRTCK). Residues Asn-1451, Asn-1497, and Asn-1551 are each glycosylated (N-linked (GlcNAc...) asparagine). LDL-receptor class B repeat units follow at residues 1479-1521 (GRVF…DWIG), 1522-1564 (RNLY…DPRM), 1567-1610 (NVMF…DYPN), 1611-1655 (RLIY…FEDF), and 1656-1696 (VYWT…IHPS). Asn-1676, Asn-1733, and Asn-1811 each carry an N-linked (GlcNAc...) asparagine glycan. LDL-receptor class B repeat units lie at residues 1791–1833 (QFIY…DWVS), 1834–1883 (RNIY…DPAR), 1884–1931 (GKLY…DIQE), 1932–1973 (QKLY…YGSF), 1974–2014 (LYYS…YHRR), 2108–2157 (GFIY…DWAA), 2158–2202 (GNLY…DPKH), 2203–2246 (RYLF…DHDT), and 2247–2290 (GYIY…FGES). Asn-2134, Asn-2178, and Asn-2225 each carry an N-linked (GlcNAc...) asparagine glycan. Residue Asn-2396 is glycosylated (N-linked (GlcNAc...) asparagine). LDL-receptor class B repeat units lie at residues 2432–2478 (NRIF…DWIN), 2479–2519 (RRIY…DPCR), 2520–2563 (GYMY…DLET), 2564–2605 (DLLY…YGQY), and 2606–2647 (IYWT…VVKT). 2 N-linked (GlcNAc...) asparagine glycosylation sites follow: Asn-2488 and Asn-2548. LDL-receptor class A domains are found at residues 2700-2738 (RCNQ…TVCA), 2741-2777 (TCRS…AGCL), 2780-2819 (NCNS…KNCP), 2822-2861 (TCPP…IYCA), 2864-2902 (TCRS…DTCG), 2907-2946 (TCRA…HHCE), 2949-2991 (NCSS…QNCT), 2994-3030 (TCSA…RGCS), 3033-3071 (PCHA…HLCH), and 3076-3112 (TCPL…KGCG). Disulfide bonds link Cys-2701/Cys-2713, Cys-2708/Cys-2726, Cys-2720/Cys-2737, Cys-2742/Cys-2754, Cys-2749/Cys-2767, Cys-2761/Cys-2776, Cys-2781/Cys-2794, Cys-2789/Cys-2807, Cys-2801/Cys-2818, Cys-2823/Cys-2836, Cys-2830/Cys-2849, Cys-2843/Cys-2860, Cys-2865/Cys-2878, Cys-2872/Cys-2891, Cys-2885/Cys-2901, Cys-2908/Cys-2920, Cys-2915/Cys-2933, and Cys-2927/Cys-2945. Asn-2782 carries N-linked (GlcNAc...) asparagine glycosylation. An N-linked (GlcNAc...) asparagine glycan is attached at Asn-2810. N-linked (GlcNAc...) asparagine glycosylation occurs at Asn-2949. Intrachain disulfides connect Cys-2950-Cys-2967, Cys-2957-Cys-2980, Cys-2974-Cys-2990, Cys-2995-Cys-3007, Cys-3002-Cys-3020, Cys-3014-Cys-3029, Cys-3034-Cys-3046, Cys-3041-Cys-3059, Cys-3053-Cys-3070, Cys-3077-Cys-3089, Cys-3084-Cys-3102, Cys-3096-Cys-3111, Cys-3116-Cys-3128, Cys-3124-Cys-3137, Cys-3139-Cys-3152, Cys-3158-Cys-3169, Cys-3165-Cys-3178, and Cys-3180-Cys-3193. The N-linked (GlcNAc...) asparagine glycan is linked to Asn-2989. The 42-residue stretch at 3112 to 3153 (GINECLDSSISRCDHNCTDTITSFYCSCLPGYKLMSDKRSCV) folds into the EGF-like 4 domain. Asn-3127 carries an N-linked (GlcNAc...) asparagine glycan. An EGF-like 5; calcium-binding domain is found at 3154–3194 (DIDECKESPQLCSQKCENVVGSYICKCAPGYIREPDGKSCR). N-linked (GlcNAc...) asparagine glycosylation is found at Asn-3213, Asn-3259, Asn-3317, and Asn-3357. LDL-receptor class B repeat units lie at residues 3241–3283 (KRLY…DWVS), 3284–3326 (RKLY…EHPR), 3335–3378 (GHVY…DYTN), 3379–3421 (DLLY…FEDT), and 3422–3462 (VFWT…YHPY). An N-linked (GlcNAc...) asparagine glycan is attached at Asn-3448. LDL-receptor class A domains are found at residues 3513 to 3551 (MCSS…DLCP), 3554 to 3592 (FCRL…VLCE), 3595 to 3633 (RCES…SHCA), 3636 to 3674 (TCRP…DECT), 3679 to 3717 (NCDN…QGCE), 3720 to 3757 (PCHP…ENCV), 3760 to 3796 (ECSE…RDCE), and 3799 to 3835 (TCHP…SACP). 24 cysteine pairs are disulfide-bonded: Cys-3514-Cys-3527, Cys-3521-Cys-3540, Cys-3534-Cys-3550, Cys-3555-Cys-3567, Cys-3562-Cys-3580, Cys-3574-Cys-3591, Cys-3596-Cys-3608, Cys-3603-Cys-3621, Cys-3615-Cys-3632, Cys-3637-Cys-3649, Cys-3644-Cys-3662, Cys-3656-Cys-3673, Cys-3680-Cys-3694, Cys-3688-Cys-3707, Cys-3701-Cys-3716, Cys-3721-Cys-3734, Cys-3729-Cys-3747, Cys-3741-Cys-3756, Cys-3761-Cys-3773, Cys-3768-Cys-3786, Cys-3780-Cys-3795, Cys-3800-Cys-3812, Cys-3807-Cys-3825, and Cys-3819-Cys-3834. Asn-3566 carries an N-linked (GlcNAc...) asparagine glycan. Asn-3682 carries an N-linked (GlcNAc...) asparagine glycan. The N-linked (GlcNAc...) asparagine glycan is linked to Asn-3840. LDL-receptor class A domains lie at 3843-3881 (YCPA…HLCF), 3884-3923 (PCES…EHCR), and 3929-3965 (PCTD…TGCN). 9 disulfide bridges follow: Cys-3844-Cys-3856, Cys-3851-Cys-3869, Cys-3863-Cys-3880, Cys-3885-Cys-3898, Cys-3893-Cys-3911, Cys-3905-Cys-3922, Cys-3930-Cys-3942, Cys-3937-Cys-3955, and Cys-3949-Cys-3964. One can recognise an EGF-like 6 domain in the interval 3968-4003 (DNRTCAENICEQNCTQLSSGGFICSCRPGFKPSTSD). Asn-3969 and Asn-3980 each carry an N-linked (GlcNAc...) asparagine glycan. 5 disulfides stabilise this stretch: Cys-3972-Cys-3981, Cys-3977-Cys-3991, Cys-4013-Cys-4023, Cys-4019-Cys-4032, and Cys-4034-Cys-4049. Positions 4009-4050 (DINECEEFGICPQSCRNSKGSYECFCVDGFKSMSTHYGERCA) constitute an EGF-like 7; calcium-binding domain. Asn-4070 carries an N-linked (GlcNAc...) asparagine glycan. LDL-receptor class B repeat units follow at residues 4156-4198 (RHIY…NPKL), 4199-4242 (GLMF…DYLN), and 4244-4285 (DRVY…FEDK). Residue Asn-4329 is glycosylated (N-linked (GlcNAc...) asparagine). The EGF-like 8 domain maps to 4379–4413 (MPPPCRCMHGGNCYFDENELPKCKCSSGYSGEYCE). Intrachain disulfides connect Cys-4383-Cys-4391, Cys-4385-Cys-4401, and Cys-4403-Cys-4412. A helical membrane pass occupies residues 4426-4446 (MAVLLTFVIVIIVGALVLVGL). At 4447-4660 (FHYRKTGSLL…ANLVKEDSDV (214 aa)) the chain is on the cytoplasmic side. The SH3-binding motif lies at 4454–4463 (SLLPTLPKLP). The PxLPxI/L motif 1; mediates interaction with ANKRA2 motif lies at 4457 to 4462 (PTLPKL). The PxLPxI/L motif 2; mediates interaction with ANKRA2 signature appears at 4460–4465 (PKLPSL). Residues Ser-4464 and Ser-4467 each carry the phosphoserine modification. The Endocytosis signal motif lies at 4522-4527 (FENPMY). The disordered stretch occupies residues 4559–4582 (NYGRPIDPSEIVPEPKPASPGADE). Residue Ser-4577 is modified to Phosphoserine. Residues 4597–4610 (QTTNFENPIYAEMD) form an interaction with DAB2 region. The NPXY motif signature appears at 4603–4606 (NPIY). The SH2-binding signature appears at 4606-4609 (YAEM). The tract at residues 4617–4660 (VAVAPPPSPSLPAKASKRNLTPGYTATEDTFKDTANLVKEDSDV) is disordered. Positions 4619 to 4630 (VAPPPSPSLPAK) match the SH3-binding motif. The residue at position 4624 (Ser-4624) is a Phosphoserine. A compositionally biased stretch (polar residues) spans 4634 to 4644 (RNLTPGYTATE). Position 4637 is a phosphothreonine (Thr-4637). At Ser-4658 the chain carries Phosphoserine.

The protein belongs to the LDLR family. In terms of assembly, binds plasminogen, extracellular matrix components, plasminogen activator-plasminogen activator inhibitor type I complex, apolipoprotein E-enriched beta-VLDL, lipoprotein lipase, lactoferrin, CLU/clusterin and calcium. Forms a multimeric complex together with LRPAP1. Interacts (via PxLPxI/L motif) with ANKRA2 (via ankyrin repeats). Interacts with LRP2BP. Interacts (via NPXY motif) with DAB2; the interaction is not affected by tyrosine phosphorylation of the NPXY motif. Interacts with MB. Interacts with BMP4. Interacts with the Sonic hedgehog protein N-product which is the active product of SHH. Interacts with CST3 in a calcium-dependent manner. Interacts with the vitamin-D binding protein GC/DBP. Interacts with sex hormone-binding protein SHBG. Interacts with angiotensin-2. Also interacts with angiotensin 1-7. Interacts with APOM. Interacts with selenoprotein SEPP1. Interacts with LEP. Interacts with ALB. Interacts with the antiapoptotic protein BIRC5/survivin. Interacts with matrix metalloproteinase MMP2 in complex with metalloproteinase inhibitor TIMP1. In neurons, forms a trimeric complex with APP and APPB1/FE65. Interacts with LDLRAP1/ARH; mediates trafficking of LRP2 to the endocytic recycling compartment. Does not interact with beta-amyloid protein 40 alone but interacts with the complex composed of beta-amyloid protein 40 and CLU/APOJ. Interacts with MDK. In terms of processing, a fraction undergoes proteolytic cleavage of the extracellular domain at the cell membrane to generate a cytoplasmic tail fragment. This is internalized into the early endosome from where it trafficks in an LDLRAP1/ARH-dependent manner to the endocytic recycling compartment (ERC). In the ERC, it is further cleaved by gamma-secretase to release a fragment which translocates to the nucleus and mediates transcriptional repression. N-glycosylation is required for ligand binding. As to expression, in the inner ear, expressed in the lumen of the endolymphatic sac where it localizes to macrophage-like cells as well as to mitochondria-rich and ribosome-rich epithelial cells (at protein level). In the inner ear, expressed in marginal cells of the stria vascularis, epithelial cells at the spiral prominence, epithelial cells of Reissner's membrane facing the cochlear duct, and Kolliker's organ (at protein level). Expressed in the choroid plexus epithelium in the brain (at protein level). In the brain, also expressed in astrocytes (at protein level). Expression also detected in epithelial cells of the kidney glomerulus and proximal tubule, lung, epididymis and yolk sac.

It is found in the apical cell membrane. The protein localises to the endosome lumen. Its subcellular location is the membrane. It localises to the clathrin-coated pit. The protein resides in the cell projection. It is found in the dendrite. The protein localises to the axon. Functionally, multiligand endocytic receptor. Acts together with CUBN to mediate endocytosis of high-density lipoproteins. Mediates receptor-mediated uptake of polybasic drugs such as aprotinin, aminoglycosides and polymyxin B. In the kidney, mediates the tubular uptake and clearance of leptin. Also mediates transport of leptin across the blood-brain barrier through endocytosis at the choroid plexus epithelium. Endocytosis of leptin in neuronal cells is required for hypothalamic leptin signaling and leptin-mediated regulation of feeding and body weight. Mediates endocytosis and subsequent lysosomal degradation of CST3 in kidney proximal tubule cells. Mediates renal uptake of 25-hydroxyvitamin D3 in complex with the vitamin D3 transporter GC/DBP. Mediates renal uptake of metallothionein-bound heavy metals. Together with CUBN, mediates renal reabsorption of myoglobin. Mediates renal uptake and subsequent lysosomal degradation of APOM. Plays a role in kidney selenium homeostasis by mediating renal endocytosis of selenoprotein SEPP1. Mediates renal uptake of the antiapoptotic protein BIRC5/survivin which may be important for functional integrity of the kidney. Mediates renal uptake of matrix metalloproteinase MMP2 in complex with metalloproteinase inhibitor TIMP1. Mediates endocytosis of Sonic hedgehog protein N-product (ShhN), the active product of SHH. Also mediates ShhN transcytosis. In the embryonic neuroepithelium, mediates endocytic uptake and degradation of BMP4, is required for correct SHH localization in the ventral neural tube and plays a role in patterning of the ventral telencephalon. Required at the onset of neurulation to sequester SHH on the apical surface of neuroepithelial cells of the rostral diencephalon ventral midline and to control PTCH1-dependent uptake and intracellular trafficking of SHH. During neurulation, required in neuroepithelial cells for uptake of folate bound to the folate receptor FOLR1 which is necessary for neural tube closure. In the adult brain, negatively regulates BMP signaling in the subependymal zone which enables neurogenesis to proceed. In astrocytes, mediates endocytosis of ALB which is required for the synthesis of the neurotrophic factor oleic acid. Involved in neurite branching. During optic nerve development, required for SHH-mediated migration and proliferation of oligodendrocyte precursor cells. Mediates endocytic uptake and clearance of SHH in the retinal margin which protects retinal progenitor cells from mitogenic stimuli and keeps them quiescent. Plays a role in reproductive organ development by mediating uptake in reproductive tissues of androgen and estrogen bound to the sex hormone binding protein SHBG. Mediates endocytosis of angiotensin-2. Also mediates endocytosis of angiotensin 1-7. Binds to the complex composed of beta-amyloid protein 40 and CLU/APOJ and mediates its endocytosis and lysosomal degradation. Required for embryonic heart development. Required for normal hearing, possibly through interaction with estrogen in the inner ear. The sequence is that of Low-density lipoprotein receptor-related protein 2 (Lrp2) from Rattus norvegicus (Rat).